Reading from the N-terminus, the 183-residue chain is uncharacterized protein (183 aa).

The N-terminal stretch at methionine 1 to serine 29 is a signal peptide. Residues proline 149–glycine 183 are disordered. Basic and acidic residues predominate over residues proline 167 to glycine 183.

The protein localises to the secreted. This is an uncharacterized protein from Homo sapiens (Human).